Consider the following 525-residue polypeptide: Cysteine--tRNA ligase (525 aa).

C49 contributes to the Zn(2+) binding site. Residues 51-61 carry the 'HIGH' region motif; the sequence is VTVYDLCHLGH. Zn(2+) contacts are provided by C258, H283, and E287. A 'KMSKS' region motif is present at residues 315-319; sequence KMSKS. K318 provides a ligand contact to ATP.

This sequence belongs to the class-I aminoacyl-tRNA synthetase family. Monomer. Zn(2+) is required as a cofactor.

The protein localises to the cytoplasm. The enzyme catalyses tRNA(Cys) + L-cysteine + ATP = L-cysteinyl-tRNA(Cys) + AMP + diphosphate. The chain is Cysteine--tRNA ligase from Synechococcus sp. (strain JA-2-3B'a(2-13)) (Cyanobacteria bacterium Yellowstone B-Prime).